A 184-amino-acid polypeptide reads, in one-letter code: Photosystem I assembly protein Ycf4 (184 aa).

The next 2 helical transmembrane spans lie at 22–42 (FCWA…GTSS) and 57–77 (IIFF…LFIS).

This sequence belongs to the Ycf4 family.

The protein resides in the plastid. Its subcellular location is the chloroplast thylakoid membrane. Its function is as follows. Seems to be required for the assembly of the photosystem I complex. The chain is Photosystem I assembly protein Ycf4 from Lepidium virginicum (Virginia pepperweed).